The chain runs to 796 residues: RalBP1-associated Eps domain-containing protein 1 (796 aa).

Residues 10–113 (EQKYYSDLFS…SKNEQESRHA (104 aa)) enclose the EH 1 domain. Residues 105–237 (KNEQESRHAA…ENWVSFADTP (133 aa)) form a disordered region. Over residues 115-126 (SYSSDSENQGSY) the composition is skewed to polar residues. Phosphoserine is present on residues Ser143, Ser145, Ser162, Ser166, and Ser170. Over residues 145–156 (SHDTVQPRTSAD) the composition is skewed to polar residues. Residue Thr173 is modified to Phosphothreonine. Residues Ser272 and Ser273 each carry the phosphoserine modification. One can recognise an EH 2 domain in the interval 285 to 374 (QRQYYVNQFK…ESLMPKLIDL (90 aa)). Tyr288 bears the Phosphotyrosine mark. Ser307 is modified (phosphoserine). An EF-hand domain is found at 318–353 (LPILELSHIWELSDFDKDGALTLDEFCAAFHLVVAR). Ca(2+)-binding residues include Asp331, Asp333, Asp335, and Glu342. The tract at residues 377 to 433 (SADVGDQPGEVGYSGSPAEAPPSKSPSMPSLNQTWPELNQSSEQWETFSERSSSSQT) is disordered. Polar residues predominate over residues 407-433 (LNQTWPELNQSSEQWETFSERSSSSQT). Ser475, Ser482, Ser489, and Ser540 each carry phosphoserine. Residues 506 to 543 (GNTVADGYSSSDSFTSDPEQIGSNVTRQRSHSGTSPDN) show a composition bias toward polar residues. 2 disordered regions span residues 506 to 624 (GNTV…IPEQ) and 638 to 725 (ASNV…QKTG). At Thr544 the chain carries Phosphothreonine. The segment covering 544 to 554 (TAPPPPPPRPQ) has biased composition (pro residues). Ser562 is subject to Phosphoserine. Residues 563–574 (LDMNRTFTVTTG) show a composition bias toward polar residues. Positions 575–584 (QQQAGVVAHP) are enriched in low complexity. Residues 585-596 (PAVPPRPQPSQA) are compositionally biased toward pro residues. Residues 612 to 623 (THTSTSPQQIPE) show a composition bias toward polar residues. The interval 652–796 (HPEVLPAEKA…LEQLRPFSHL (145 aa)) is interaction with RALBP1. Composition is skewed to basic and acidic residues over residues 671 to 681 (AKTDSKTEEKT) and 708 to 722 (KSED…EHTQ). A phosphoserine mark is found at Ser709 and Ser740. Residues 751 to 791 (SIRRNKETNTVLARLNSELQQQLKDVLEERISLEVQLEQLR) adopt a coiled-coil conformation.

As to quaternary structure, homodimer (Potential). Interacts with RAB11FIP2. Interacts with RALBP1, CRK and GRB2. Binding to RALBP1 does not affect its Ral-binding activity. Forms a complex with the SH3 domains of CRK and GRB2 which may link it to an EGF-responsive tyrosine kinase. Interacts with AMPH, ITSN1 (via SH3 domains) and SGIP1; may be involved in clathrin-mediated endocytosis. Post-translationally, EGF stimulates phosphorylation on Tyr-residues. Widely expressed with highest levels in heart and testis.

The protein resides in the membrane. It is found in the clathrin-coated pit. Its function is as follows. May coordinate the cellular actions of activated EGF receptors and Ral-GTPases. The protein is RalBP1-associated Eps domain-containing protein 1 (REPS1) of Homo sapiens (Human).